A 614-amino-acid chain; its full sequence is DNA mismatch repair protein MutL (614 aa).

Belongs to the DNA mismatch repair MutL/HexB family.

In terms of biological role, this protein is involved in the repair of mismatches in DNA. It is required for dam-dependent methyl-directed DNA mismatch repair. May act as a 'molecular matchmaker', a protein that promotes the formation of a stable complex between two or more DNA-binding proteins in an ATP-dependent manner without itself being part of a final effector complex. This Thermoanaerobacter pseudethanolicus (strain ATCC 33223 / 39E) (Clostridium thermohydrosulfuricum) protein is DNA mismatch repair protein MutL.